A 414-amino-acid polypeptide reads, in one-letter code: MTQANLSETLFKPRFKHPETSTLVRRFNHGAQPPVQSALDGKTIPHWYRMINRLMWIWRGVDPREILEVQSRIVMSAAERTDNDLYDTVIGYRGGNWIYEWATQAMVWQQKACAEEDPQLSGRHWLHAATLYNIAAYPHLKGDDLAEQAQALSNRAYEEAAQRLPGTMRQMEFTVPGGAPITGFLHMPKGDGPFPTVLMCGGLDAMQTDYYSLYERYFAPRGIAMLTIDMPSVGFSSKRKLTQDSSLLHQHVLKALPNVPWVDHTRVAAFGFRFGANVAVRLAYLESPRLKAVACLGPVVHTLLSDFKCQQQVPEMYLDVLASRLGMHDASDEALRVELNRYSLKVQGLLGRRCPTPMLSGYWKNDPFSPEEDSRLITSSSADGKLLEIPFNPVYRNFDKGLQEITSWIEKRLC.

It belongs to the FrsA family.

The enzyme catalyses a carboxylic ester + H2O = an alcohol + a carboxylate + H(+). Its function is as follows. Catalyzes the hydrolysis of esters. In Escherichia fergusonii (strain ATCC 35469 / DSM 13698 / CCUG 18766 / IAM 14443 / JCM 21226 / LMG 7866 / NBRC 102419 / NCTC 12128 / CDC 0568-73), this protein is Esterase FrsA.